We begin with the raw amino-acid sequence, 51 residues long: Large ribosomal subunit protein bL33 (51 aa).

The segment at 1-20 (MRDKIRLNSSAGTGHFYTTD) is disordered.

The protein belongs to the bacterial ribosomal protein bL33 family.

The sequence is that of Large ribosomal subunit protein bL33 from Psychromonas ingrahamii (strain DSM 17664 / CCUG 51855 / 37).